We begin with the raw amino-acid sequence, 836 residues long: Translation initiation factor IF-2 (836 aa).

Residues 1-233 (MSDTDGKKPL…RSLAAMKRKQ (233 aa)) are disordered. The span at 18-27 (SGQVKQSFSH) shows a compositional bias: polar residues. Residues 50–60 (SGSSTTTSSPS) show a composition bias toward low complexity. Positions 88 to 156 (KLREVEDAKR…AARRAEEAKR (69 aa)) are enriched in basic and acidic residues. A compositionally biased stretch (low complexity) spans 167–176 (PAESRASAPP). Positions 185–206 (SRKEREREADRDRTTKKDDSRR) are enriched in basic and acidic residues. Residues 333–501 (PRPPIITIMG…NIALQAEILD (169 aa)) enclose the tr-type G domain. Residues 342 to 349 (GHVDHGKT) are G1. 342-349 (GHVDHGKT) provides a ligand contact to GTP. The G2 stretch occupies residues 367–371 (GITQH). Residues 389-392 (DTPG) are G3. Residues 389–393 (DTPGH) and 443–446 (NKID) contribute to the GTP site. Residues 443-446 (NKID) form a G4 region. The segment at 479–481 (SAK) is G5.

This sequence belongs to the TRAFAC class translation factor GTPase superfamily. Classic translation factor GTPase family. IF-2 subfamily.

It is found in the cytoplasm. Its function is as follows. One of the essential components for the initiation of protein synthesis. Protects formylmethionyl-tRNA from spontaneous hydrolysis and promotes its binding to the 30S ribosomal subunits. Also involved in the hydrolysis of GTP during the formation of the 70S ribosomal complex. This Cereibacter sphaeroides (strain ATCC 17023 / DSM 158 / JCM 6121 / CCUG 31486 / LMG 2827 / NBRC 12203 / NCIMB 8253 / ATH 2.4.1.) (Rhodobacter sphaeroides) protein is Translation initiation factor IF-2.